The chain runs to 227 residues: 7-cyano-7-deazaguanine synthase (227 aa).

8-18 (FSGGQDSTTCL) is a binding site for ATP. Residues C187, C196, C199, and C202 each coordinate Zn(2+).

The protein belongs to the QueC family. Requires Zn(2+) as cofactor.

The catalysed reaction is 7-carboxy-7-deazaguanine + NH4(+) + ATP = 7-cyano-7-deazaguanine + ADP + phosphate + H2O + H(+). The protein operates within purine metabolism; 7-cyano-7-deazaguanine biosynthesis. Functionally, catalyzes the ATP-dependent conversion of 7-carboxy-7-deazaguanine (CDG) to 7-cyano-7-deazaguanine (preQ(0)). This Aliivibrio fischeri (strain MJ11) (Vibrio fischeri) protein is 7-cyano-7-deazaguanine synthase.